Reading from the N-terminus, the 247-residue chain is uncharacterized protein (247 aa).

2 helical membrane passes run 9–29 (IIAICLIFLSILVYSIHFLIF) and 37–57 (SYFLLHLAFVPIEVLLVSLII).

Its subcellular location is the cell membrane. This is an uncharacterized protein from Methanocaldococcus jannaschii (strain ATCC 43067 / DSM 2661 / JAL-1 / JCM 10045 / NBRC 100440) (Methanococcus jannaschii).